Reading from the N-terminus, the 205-residue chain is uncharacterized protein (205 aa).

Residues serine 119 and histidine 160 each act as charge relay system in the active site.

It belongs to the peptidase S51 family.

This is an uncharacterized protein from Listeria monocytogenes serovar 1/2a (strain ATCC BAA-679 / EGD-e).